The sequence spans 201 residues: MAVEALHCGLNPRGIDHPAHAEGIKLQIEGEGVESQSIKNKNFQKVPDQKGTPKRLQAEAETAKSATVKLSKPVALWTQQDVCKWLKKHCPNQYQIYSESFKQHDITGRALLRLTDKKLERMGIAQENLRQHILQQVLQLKVREEVRNLQLLTQGTLLLPDGWMDGEIRRKTTLLLGQTGVRENLLLFLHRISIIENSIQI.

The region spanning W77 to R143 is the SAM domain.

Expressed in the brain.

The sequence is that of Sterile alpha motif domain-containing protein 12 (SAMD12) from Homo sapiens (Human).